The following is a 271-amino-acid chain: Urease accessory protein UreD (271 aa).

Belongs to the UreD family. As to quaternary structure, ureD, UreF and UreG form a complex that acts as a GTP-hydrolysis-dependent molecular chaperone, activating the urease apoprotein by helping to assemble the nickel containing metallocenter of UreC. The UreE protein probably delivers the nickel.

The protein resides in the cytoplasm. In terms of biological role, required for maturation of urease via the functional incorporation of the urease nickel metallocenter. The protein is Urease accessory protein UreD of Haemophilus influenzae (strain PittEE).